A 379-amino-acid polypeptide reads, in one-letter code: Muconate cycloisomerase 1-1 (379 aa).

K169 is an active-site residue. Mn(2+) contacts are provided by D198, E224, and D247.

It belongs to the mandelate racemase/muconate lactonizing enzyme family. In terms of assembly, homooctamer. The cofactor is Mn(2+).

The enzyme catalyses (S)-muconolactone = cis,cis-muconate + H(+). Its pathway is aromatic compound metabolism; beta-ketoadipate pathway; 5-oxo-4,5-dihydro-2-furylacetate from catechol: step 2/3. Its function is as follows. Catalyzes a syn cycloisomerization. In Acinetobacter lwoffii, this protein is Muconate cycloisomerase 1-1 (catB1).